The following is a 467-amino-acid chain: Xanthan biosynthesis protein XanB (467 aa).

This sequence belongs to the mannose-6-phosphate isomerase type 2 family.

It catalyses the reaction D-mannose 6-phosphate = D-fructose 6-phosphate. The catalysed reaction is alpha-D-mannose 1-phosphate + GTP + H(+) = GDP-alpha-D-mannose + diphosphate. Its pathway is nucleotide-sugar biosynthesis; GDP-alpha-D-mannose biosynthesis; GDP-alpha-D-mannose from alpha-D-mannose 1-phosphate (GTP route): step 1/1. It functions in the pathway nucleotide-sugar biosynthesis; GDP-alpha-D-mannose biosynthesis; alpha-D-mannose 1-phosphate from D-fructose 6-phosphate: step 1/2. Its function is as follows. Involved in xanthan production. This chain is Xanthan biosynthesis protein XanB (xanB), found in Xanthomonas campestris pv. campestris (strain ATCC 33913 / DSM 3586 / NCPPB 528 / LMG 568 / P 25).